A 325-amino-acid polypeptide reads, in one-letter code: Chain length determinant protein (325 aa).

Residues 1 to 31 (MRVENNNVSGQNHDPEQIDLIDLLVQLWRGK) are Cytoplasmic-facing. A helical membrane pass occupies residues 32-52 (MTIIISVIVAIALAIGYLAVA). At 53–294 (KEKWTSTAIV…LPIRRDSPKK (242 aa)) the chain is on the periplasmic side. Residues 295–315 (AITLILAVLLGGMVGAGIVLG) form a helical membrane-spanning segment. Over 316–325 (RNALRNYNAK) the chain is Cytoplasmic.

The protein belongs to the WzzB/Cld/Rol family.

The protein localises to the cell inner membrane. The protein operates within bacterial outer membrane biogenesis; lipopolysaccharide biosynthesis. In terms of biological role, confers a modal distribution of chain length on the O-antigen component of lipopolysaccharide (LPS). Gives rise to a reduced number of short chain molecules and increases in numbers of longer molecules. This Shigella dysenteriae protein is Chain length determinant protein (wzzB).